Reading from the N-terminus, the 365-residue chain is DNA replication and repair protein RecF (365 aa).

30–37 lines the ATP pocket; that stretch reads GRNAQGKT.

It belongs to the RecF family.

It is found in the cytoplasm. In terms of biological role, the RecF protein is involved in DNA metabolism; it is required for DNA replication and normal SOS inducibility. RecF binds preferentially to single-stranded, linear DNA. It also seems to bind ATP. This chain is DNA replication and repair protein RecF, found in Streptococcus pneumoniae serotype 2 (strain D39 / NCTC 7466).